The chain runs to 156 residues: Ribonuclease H (156 aa).

The RNase H type-1 domain occupies 7-148 (QDKIVMIATD…ADQLASDAAI (142 aa)). Mg(2+) is bound by residues Asp-16, Glu-54, Asp-76, and Asp-140.

The protein belongs to the RNase H family. In terms of assembly, monomer. The cofactor is Mg(2+).

The protein localises to the cytoplasm. It catalyses the reaction Endonucleolytic cleavage to 5'-phosphomonoester.. Its function is as follows. Endonuclease that specifically degrades the RNA of RNA-DNA hybrids. This Zymomonas mobilis subsp. mobilis (strain ATCC 31821 / ZM4 / CP4) protein is Ribonuclease H (rnhA).